We begin with the raw amino-acid sequence, 392 residues long: MKFIDEALIRIEAGDGGNGCVSFRREKFIPKGGPDGGDGGDGGDVYLIADENLNTLIDYRFEKRFAAERGENGRSSDCTGRRGKDITLRVPVGTRAIDNDTKEVLGDLTKHGTKMLVAKGGYHGLGNARFKSSVNRAPRQKTNGTPGEKRDLQLELMLLADVGMLGLPNAGKSTFIRAVSAAKPKVADYPFTTLVPSLGVTRVDTSRSFVIADIPGLIEGASEGAGLGVRFLKHLERCHVLIHLVDIAPIDESDPADNIAIIEGELFQYSEKLANKPRWLVFNKIDTLSDEEATARAKNIMQRLGGEDDYYLISAATGKNVDVLCRDIMDFIEENPRQEQEKIDAQEVKFKWDDYHQEQLSEQVFTEDDQEGDDWDDWSEDDEEGVEIIYKP.

The 159-residue stretch at 1-159 folds into the Obg domain; that stretch reads MKFIDEALIR…RDLQLELMLL (159 aa). The OBG-type G domain occupies 160–333; sequence ADVGMLGLPN…LCRDIMDFIE (174 aa). GTP contacts are provided by residues 166–173, 191–195, 213–216, 283–286, and 314–316; these read GLPNAGKS, FTTLV, DIPG, NKID, and SAA. Residues S173 and T193 each contribute to the Mg(2+) site. The tract at residues 362–392 is disordered; the sequence is EQVFTEDDQEGDDWDDWSEDDEEGVEIIYKP. Residues 365 to 386 are compositionally biased toward acidic residues; that stretch reads FTEDDQEGDDWDDWSEDDEEGV.

The protein belongs to the TRAFAC class OBG-HflX-like GTPase superfamily. OBG GTPase family. As to quaternary structure, monomer. The cofactor is Mg(2+).

It localises to the cytoplasm. Its function is as follows. An essential GTPase which binds GTP, GDP and possibly (p)ppGpp with moderate affinity, with high nucleotide exchange rates and a fairly low GTP hydrolysis rate. Plays a role in control of the cell cycle, stress response, ribosome biogenesis and in those bacteria that undergo differentiation, in morphogenesis control. In Histophilus somni (strain 129Pt) (Haemophilus somnus), this protein is GTPase Obg.